The following is a 234-amino-acid chain: Large ribosomal subunit protein uL1 (234 aa).

The protein belongs to the universal ribosomal protein uL1 family. As to quaternary structure, part of the 50S ribosomal subunit.

Functionally, binds directly to 23S rRNA. The L1 stalk is quite mobile in the ribosome, and is involved in E site tRNA release. Protein L1 is also a translational repressor protein, it controls the translation of the L11 operon by binding to its mRNA. This chain is Large ribosomal subunit protein uL1, found in Helicobacter pylori (strain Shi470).